Reading from the N-terminus, the 2372-residue chain is Nonribosomal peptide synthase roqA (2372 aa).

The segment at 217–610 (EHCRSQPDAE…VGRKDREVKI (394 aa)) is adenylation 1. The interval 723–745 (AASSHSSTREQPSNQRDKEDVEL) is disordered. The segment covering 725–736 (SSHSSTREQPSN) has biased composition (polar residues). The region spanning 750–823 (SAKENTLCSV…KIARCTAESK (74 aa)) is the Carrier 1 domain. Residue Ser-784 is modified to O-(pantetheine 4'-phosphoryl)serine. The condensation 1 stretch occupies residues 856 to 1122 (EDIYPCTPLQ…FATFPFRTQL (267 aa)). The tract at residues 1290 to 1679 (QPNSEAVCAW…VGRKDTQVKL (390 aa)) is adenylation 2. In terms of domain architecture, Carrier 2 spans 1819–1895 (KPTTEQERFV…LFCKHVILIQ (77 aa)). The residue at position 1856 (Ser-1856) is an O-(pantetheine 4'-phosphoryl)serine. The tract at residues 1962-2227 (TSNYTSTAIF…FNVLPCRIAI (266 aa)) is condensation 2.

It functions in the pathway alkaloid biosynthesis. Functionally, dipeptide synthase; part of the gene cluster that mediates the biosynthesis of the mycotoxins roquefortine C and meleagrin. The first stage is catalyzed by the dipeptide synthase roqA which condenses histidine and tryptophan to produce histidyltryptophanyldiketopiperazine (HTD). HTD is then converted to roquefortine C through two possible pathways. In the first pathway, prenyltransferase roqD transforms HTD to the intermediate roquefortine D, which is in turn converted to roquefortine C by the cytochrome P450 monooxygenase roqR. In the second pathway, HTD is first converted to the intermediate dehydrohistidyltryptophanyldi-ketopiperazine (DHTD) by roqR which is then prenylated by roqD to form roquefortine C. Roquefortine C can be further transformed to meleagrin via three more reactions including oxydation to glandicolin A by roqM, which is further reduced to glandicoline B by roqO. Finally, glandicoline B is converted to meleagrin by the glandicoline B O-methyltransferase roqN. More studies identified further branching and additional metabolites produced by the roquefortine/meleagrin cluster, including roquefortine F, roquefortine L, roquefortine M, roquefortine N and neoxaline. This is Nonribosomal peptide synthase roqA from Penicillium rubens (strain ATCC 28089 / DSM 1075 / NRRL 1951 / Wisconsin 54-1255) (Penicillium chrysogenum).